The sequence spans 349 residues: Putative phytanoyl-CoA dioxygenase (349 aa).

Residues lysine 118 and 169–171 (HLD) each bind 2-oxoglutarate. Histidine 169 and aspartate 171 together coordinate Fe cation.

This sequence belongs to the PhyH family. Requires Fe cation as cofactor. L-ascorbate serves as cofactor.

It carries out the reaction phytanoyl-CoA + 2-oxoglutarate + O2 = 2-hydroxyphytanoyl-CoA + succinate + CO2. It functions in the pathway lipid metabolism; fatty acid metabolism. Functionally, converts phytanoyl-CoA to 2-hydroxyphytanoyl-CoA. The polypeptide is Putative phytanoyl-CoA dioxygenase (Dictyostelium discoideum (Social amoeba)).